A 368-amino-acid polypeptide reads, in one-letter code: C2H2 type master regulator of conidiophore development BrlA (368 aa).

The C2H2-type 1; degenerate zinc-finger motif lies at 268–292; sequence CKCDYPGCHKAFRRNEHLKRHKQTF. A C2H2-type 2 zinc finger spans residues 300 to 323; that stretch reads FSCEFCGKDQFNRQDNLNNHRKLH. Residues 338 to 368 are disordered; that stretch reads AAVPIIEQEERSRKRRAPPKSKSADKRVDDY. The span at 359-368 shows a compositional bias: basic and acidic residues; the sequence is KSADKRVDDY.

The protein resides in the nucleus. In terms of biological role, brlA, abaA and wetA are pivotal regulators of conidiophore development and conidium maturation. They act individually and together to regulate their own expression and that of numerous other sporulation-specific genes. BrlA, abaA and wetA act together to positively regulate the expression of the Pks1 gene cluster that mediates the biosynthesis of an anthraquinone derivative pigment that contributes to conidial pigmentation that provides protection from UV radiation, heat and cold stress. This chain is C2H2 type master regulator of conidiophore development BrlA, found in Metarhizium robertsii (strain ARSEF 23 / ATCC MYA-3075) (Metarhizium anisopliae (strain ARSEF 23)).